Consider the following 359-residue polypeptide: tRNA/tmRNA (uracil-C(5))-methyltransferase (359 aa).

5 residues coordinate S-adenosyl-L-methionine: Q183, Y211, N216, E232, and D292. C317 acts as the Nucleophile in catalysis. E351 functions as the Proton acceptor in the catalytic mechanism.

This sequence belongs to the class I-like SAM-binding methyltransferase superfamily. RNA M5U methyltransferase family. TrmA subfamily.

The enzyme catalyses uridine(54) in tRNA + S-adenosyl-L-methionine = 5-methyluridine(54) in tRNA + S-adenosyl-L-homocysteine + H(+). It catalyses the reaction uridine(341) in tmRNA + S-adenosyl-L-methionine = 5-methyluridine(341) in tmRNA + S-adenosyl-L-homocysteine + H(+). Functionally, dual-specificity methyltransferase that catalyzes the formation of 5-methyluridine at position 54 (m5U54) in all tRNAs, and that of position 341 (m5U341) in tmRNA (transfer-mRNA). The sequence is that of tRNA/tmRNA (uracil-C(5))-methyltransferase from Pseudomonas fluorescens (strain Pf0-1).